A 205-amino-acid chain; its full sequence is RNA pyrophosphohydrolase (205 aa).

Residues 6–149 (GFRPNVGIVL…KRGVYARALR (144 aa)) enclose the Nudix hydrolase domain. The short motif at 38–59 (GGMNTDETPVEAMYRELREETG) is the Nudix box element. Positions 178–205 (GSSAAGHDSPRKRPRKRNGARAMRINND) are disordered. Residues 187 to 196 (PRKRPRKRNG) are compositionally biased toward basic residues.

This sequence belongs to the Nudix hydrolase family. RppH subfamily. Requires a divalent metal cation as cofactor.

Its function is as follows. Accelerates the degradation of transcripts by removing pyrophosphate from the 5'-end of triphosphorylated RNA, leading to a more labile monophosphorylated state that can stimulate subsequent ribonuclease cleavage. This is RNA pyrophosphohydrolase from Xanthomonas axonopodis pv. citri (strain 306).